We begin with the raw amino-acid sequence, 386 residues long: 2,3-diketo-5-methylthiopentyl-1-phosphate enolase (386 aa).

Lysine 85 serves as the catalytic Proton acceptor. Substrate is bound by residues lysine 131, 157–160, histidine 248, glycine 316, and 338–339; these read KDDE and GT. Lysine 157, aspartate 159, and glutamate 160 together coordinate Mg(2+). At lysine 157 the chain carries N6-carboxylysine.

The protein belongs to the RuBisCO large chain family. Type IV subfamily. As to quaternary structure, homodimer. Requires Mg(2+) as cofactor.

It carries out the reaction 5-methylsulfanyl-2,3-dioxopentyl phosphate = 2-hydroxy-5-methylsulfanyl-3-oxopent-1-enyl phosphate. Its pathway is amino-acid biosynthesis; L-methionine biosynthesis via salvage pathway; L-methionine from S-methyl-5-thio-alpha-D-ribose 1-phosphate: step 3/6. In terms of biological role, catalyzes the enolization of 2,3-diketo-5-methylthiopentyl-1-phosphate (DK-MTP-1-P) into 2-hydroxy-3-keto-5-methylthiopentenyl-1-phosphate (HK-MTPenyl-1-P). This is 2,3-diketo-5-methylthiopentyl-1-phosphate enolase (mtnW) from Microcystis aeruginosa.